Consider the following 536-residue polypeptide: Heat shock factor protein 2 (536 aa).

Residues lysine 2 and lysine 82 each participate in a glycyl lysine isopeptide (Lys-Gly) (interchain with G-Cter in SUMO2) cross-link. The DNA-binding element occupies 7 to 112; the sequence is VPAFLSKLWT…LLENIKRKVS (106 aa). A Nuclear localization signal motif is present at residues 108 to 122; sequence KRKVSSSKPEENKIR. The segment at 119–192 is hydrophobic repeat HR-A/B; that stretch reads NKIRQEDLTK…VTLVQNNQLV (74 aa). Glycyl lysine isopeptide (Lys-Gly) (interchain with G-Cter in SUMO2) cross-links involve residues lysine 135, lysine 139, lysine 151, lysine 210, lysine 218, and lysine 237. Residues 195–210 carry the Nuclear localization signal motif; the sequence is KRKRPLLLNTNGAQKK. The segment at 300-337 is disordered; that stretch reads QSGEQNEPARESLSSGSDGSSPLMSSAVQLNGSSSLTS. A compositionally biased stretch (low complexity) spans 311–325; sequence SLSSGSDGSSPLMSS. Residues 326 to 337 show a composition bias toward polar residues; that stretch reads AVQLNGSSSLTS. Residues 360-385 form a hydrophobic repeat HR-C region; it reads LLDYLDSIDCSLEDFQAMLSGRQFSI. The disordered stretch occupies residues 407-438; it reads NNTKSENKGLETTKNNVVQPVSEEGRKSKSKP. Residues 429 to 438 show a composition bias toward basic and acidic residues; sequence EEGRKSKSKP.

Belongs to the HSF family. In terms of assembly, DNA-binding homotrimer in stressed or heat shocked cells, otherwise found as a homodimer.

The protein resides in the cytoplasm. Its subcellular location is the nucleus. DNA-binding protein that specifically binds heat shock promoter elements (HSE) and activates transcription. In higher eukaryotes, HSF is unable to bind to the HSE unless the cells are heat shocked. This Homo sapiens (Human) protein is Heat shock factor protein 2 (HSF2).